We begin with the raw amino-acid sequence, 308 residues long: tRNA uridine(34) hydroxylase (308 aa).

Positions 128–222 constitute a Rhodanese domain; the sequence is ADENTVVVDT…YLEEVPREQS (95 aa). Residue Cys182 is the Cysteine persulfide intermediate of the active site.

It belongs to the TrhO family.

The enzyme catalyses uridine(34) in tRNA + AH2 + O2 = 5-hydroxyuridine(34) in tRNA + A + H2O. Its function is as follows. Catalyzes oxygen-dependent 5-hydroxyuridine (ho5U) modification at position 34 in tRNAs. The chain is tRNA uridine(34) hydroxylase from Brucella suis biovar 1 (strain 1330).